Consider the following 142-residue polypeptide: Large ribosomal subunit protein uL13 (142 aa).

The protein belongs to the universal ribosomal protein uL13 family. In terms of assembly, part of the 50S ribosomal subunit.

Its function is as follows. This protein is one of the early assembly proteins of the 50S ribosomal subunit, although it is not seen to bind rRNA by itself. It is important during the early stages of 50S assembly. This chain is Large ribosomal subunit protein uL13, found in Trichlorobacter lovleyi (strain ATCC BAA-1151 / DSM 17278 / SZ) (Geobacter lovleyi).